A 162-amino-acid polypeptide reads, in one-letter code: Heat shock protein beta-6 (162 aa).

The segment at Met1–Gly72 is involved in stabilization of the HSPB1:HSBP6 heterodimer. At Ser16 the chain carries Phosphoserine. An Isoglutamyl lysine isopeptide (Gln-Lys) (interchain with K-162) cross-link involves residue Gln31. The sHSP domain maps to Arg56–Lys162. A Deamidated glutamine modification is found at Gln66. A Phosphoserine modification is found at Ser157. Residue Lys162 forms an Isoglutamyl lysine isopeptide (Lys-Gln) (interchain with Q-31) linkage.

This sequence belongs to the small heat shock protein (HSP20) family. As to quaternary structure, homodimer. Small heat shock proteins form high molecular mass oligomers containing variable number of monomers; these oligomers display a very flexible quaternary structure easily exchanging their subunits. Heterooligomer with HSPB1; formed through oligomerization of HSPB1:HSBP6 dimers; subunit exchange leads to formation of at least two different heterooligomeric complexes, differing in variable quantities of HSPB1 and HSPB6 homodimers in addition to HSPB1:HSPB6 heterodimers. Heterooligomer with CRYAB; large heterooligomers consist of CRYAB homodimers and HSPB5:HSPB6 heterodimers but lacking HSPB6 homodimers. Interacts with BAG3. Interacts (phosphorylated) with YWHAZ. Interacts with PDE4A and PDE4D; required for maintenance of the non-phosphorylated state of HSPB6 under basal conditions. Interacts with KDR. Interacts with PRKD1. The N-terminus is blocked. Post-translationally, phosphorylated at Ser-16 by PKA and probably PKD1K; required to protect cardiomyocytes from apoptosis. As to expression, widely expressed. High expression in muscle tissues.

It localises to the cytoplasm. The protein localises to the nucleus. It is found in the secreted. Its function is as follows. Small heat shock protein which functions as a molecular chaperone probably maintaining denatured proteins in a folding-competent state. Seems to have versatile functions in various biological processes. Plays a role in regulating muscle function such as smooth muscle vasorelaxation and cardiac myocyte contractility. May regulate myocardial angiogenesis implicating KDR. Overexpression mediates cardioprotection and angiogenesis after induced damage. Stabilizes monomeric YWHAZ thereby supporting YWHAZ chaperone-like activity. This is Heat shock protein beta-6 (Hspb6) from Rattus norvegicus (Rat).